The primary structure comprises 307 residues: Reaction center protein M chain (307 aa).

The next 3 helical transmembrane spans lie at 52-78, 110-139, and 142-167; these read LGIAGTVSLAFGAAWFFTIGVWYWYQA, QGGVWQIASLFMAISVIAWWVRVYTRADQL, and GKHMAWAFLSAIWLWSVLGFWRPILM. The (7R,8Z)-bacteriochlorophyll b site is built by His181 and His201. The helical transmembrane segment at 197–225 threads the bilayer; that stretch reads YNPFHGLSIAALYGSALLFAMHGATILAV. Fe cation-binding residues include His218 and Glu233. Trp251 serves as a coordination point for a ubiquinone. Residues 259–285 traverse the membrane as a helical segment; the sequence is ATMEGIHRWAIWMAVMVTLTGGIGILL. Position 265 (His265) interacts with Fe cation.

The protein belongs to the reaction center PufL/M/PsbA/D family. Reaction center is composed of four bacteriochlorophylls, two bacteriopheophytins, two ubiquinones, one iron, and three highly hydrophobic polypeptide chains (designated L, M, and H).

Its subcellular location is the cellular chromatophore membrane. In terms of biological role, the reaction center is a membrane-bound complex that mediates the initial photochemical event in the electron transfer process of photosynthesis. This Rhodobacter capsulatus (Rhodopseudomonas capsulata) protein is Reaction center protein M chain (pufM).